Consider the following 144-residue polypeptide: Large-conductance mechanosensitive channel (144 aa).

Transmembrane regions (helical) follow at residues 16–36 (VIDLAVGVIIGAAFGKIVDSV) and 86–106 (GNFLTIVVNFVILAFIIFLMV).

This sequence belongs to the MscL family. As to quaternary structure, homopentamer.

The protein resides in the cell inner membrane. Its function is as follows. Channel that opens in response to stretch forces in the membrane lipid bilayer. May participate in the regulation of osmotic pressure changes within the cell. The protein is Large-conductance mechanosensitive channel of Cupriavidus pinatubonensis (strain JMP 134 / LMG 1197) (Cupriavidus necator (strain JMP 134)).